Here is a 563-residue protein sequence, read N- to C-terminus: Arginine--tRNA ligase (563 aa).

Residues 120–130 carry the 'HIGH' region motif; the sequence is PNIAKPFHIGH.

It belongs to the class-I aminoacyl-tRNA synthetase family. As to quaternary structure, monomer.

It is found in the cytoplasm. The catalysed reaction is tRNA(Arg) + L-arginine + ATP = L-arginyl-tRNA(Arg) + AMP + diphosphate. This Clostridium botulinum (strain Okra / Type B1) protein is Arginine--tRNA ligase.